Consider the following 461-residue polypeptide: SWM histone demethylase complex subunit phf1 (461 aa).

Residues 79–130 (PYGGMTMPASSSSGATSVPPEQDPSLSVSFNRLPKSASTKTKNGRIRSSRRE) form a disordered region. The segment covering 102 to 119 (PSLSVSFNRLPKSASTKT) has biased composition (polar residues). The PHD-type zinc-finger motif lies at 190–246 (VTLCSVCQRGHSPLSNRIVFCDGCNSPYHQLCHHPPIDDATVQDVDAEWFCMKCQYR).

Component of the SWM histone demethylase complex composed of at least lsd1, lsd2, phf1 and phf2.

It localises to the nucleus. Its function is as follows. Component of the SWM histone demethylase complex that specifically demethylates H3K9me2, a specific tag for epigenetic transcriptional activation, thereby acting as a corepressor. Has a role in regulating heterochromatin propagation and euchromatic transcription. This chain is SWM histone demethylase complex subunit phf1 (phf1), found in Schizosaccharomyces pombe (strain 972 / ATCC 24843) (Fission yeast).